The chain runs to 121 residues: Large ribosomal subunit protein eL18 (121 aa).

It belongs to the eukaryotic ribosomal protein eL18 family.

This is Large ribosomal subunit protein eL18 from Methanospirillum hungatei JF-1 (strain ATCC 27890 / DSM 864 / NBRC 100397 / JF-1).